Consider the following 381-residue polypeptide: tRNA-specific 2-thiouridylase MnmA (381 aa).

Residues 14-21 (AMSGGVDS) and M40 each bind ATP. C108 (nucleophile) is an active-site residue. C108 and C205 form a disulfide bridge. Residue G132 participates in ATP binding. The interval 155–157 (KDQ) is interaction with tRNA. C205 acts as the Cysteine persulfide intermediate in catalysis. Positions 309–310 (RY) are interaction with tRNA.

It belongs to the MnmA/TRMU family.

It is found in the cytoplasm. It catalyses the reaction S-sulfanyl-L-cysteinyl-[protein] + uridine(34) in tRNA + AH2 + ATP = 2-thiouridine(34) in tRNA + L-cysteinyl-[protein] + A + AMP + diphosphate + H(+). Catalyzes the 2-thiolation of uridine at the wobble position (U34) of tRNA, leading to the formation of s(2)U34. The sequence is that of tRNA-specific 2-thiouridylase MnmA from Deinococcus geothermalis (strain DSM 11300 / CIP 105573 / AG-3a).